Consider the following 167-residue polypeptide: Regulator of sigma D (167 aa).

This sequence belongs to the Rsd/AlgQ family. In terms of assembly, interacts with RpoD.

It is found in the cytoplasm. Functionally, binds RpoD and negatively regulates RpoD-mediated transcription activation by preventing the interaction between the primary sigma factor RpoD with the catalytic core of the RNA polymerase and with promoter DNA. May be involved in replacement of the RNA polymerase sigma subunit from RpoD to RpoS during the transition from exponential growth to the stationary phase. The chain is Regulator of sigma D from Yersinia enterocolitica serotype O:8 / biotype 1B (strain NCTC 13174 / 8081).